Reading from the N-terminus, the 59-residue chain is Large ribosomal subunit protein bL32 (59 aa).

It belongs to the bacterial ribosomal protein bL32 family.

This is Large ribosomal subunit protein bL32 from Mesoplasma florum (strain ATCC 33453 / NBRC 100688 / NCTC 11704 / L1) (Acholeplasma florum).